We begin with the raw amino-acid sequence, 137 residues long: MATNKSIKSVVICVLILGLVLEQVQVEAKSCCKNTTGRNCYNACRFAGGSRPVCATACGCKIISGPTCPRDYPKLNLLPESGEPNATEYCTIGCRTSVCDNMDNVSRGQEMKFDMGLCSNACARFCNDGEVIQSVEA.

A signal peptide spans methionine 1–alanine 28. Disulfide bonds link cysteine 31/cysteine 68, cysteine 32/cysteine 60, cysteine 40/cysteine 58, and cysteine 44/cysteine 54. The propeptide at leucine 75–alanine 137 is acidic domain.

It belongs to the plant thionin (TC 1.C.44) family. 4 C-C subfamily.

The protein resides in the secreted. Thionins are small plant proteins which are toxic to animal cells. They seem to exert their toxic effect at the level of the cell membrane. Their precise function is not known. The sequence is that of Leaf-specific thionin (THI1.5) from Hordeum vulgare (Barley).